A 185-amino-acid polypeptide reads, in one-letter code: MAEAKYEPRLKKEYVERIRKAMQEKFSYANEMMIPKLDKIVINMGVGEATADSKKPTVAAADLAAIAGQKPVITRARNSIAGFKVRENMPIGAKVTLRGARMYEFLDRLVNIALPRVRDFRGLNPKSFDGRGNFAMGIKEHIVFPEINYDKVDQMWGMDIIVCTTATTDDEARALLKEFSFPFRQ.

Belongs to the universal ribosomal protein uL5 family. In terms of assembly, part of the 50S ribosomal subunit; part of the 5S rRNA/L5/L18/L25 subcomplex. Contacts the 5S rRNA and the P site tRNA. Forms a bridge to the 30S subunit in the 70S ribosome.

Functionally, this is one of the proteins that bind and probably mediate the attachment of the 5S RNA into the large ribosomal subunit, where it forms part of the central protuberance. In the 70S ribosome it contacts protein S13 of the 30S subunit (bridge B1b), connecting the 2 subunits; this bridge is implicated in subunit movement. Contacts the P site tRNA; the 5S rRNA and some of its associated proteins might help stabilize positioning of ribosome-bound tRNAs. The chain is Large ribosomal subunit protein uL5 from Rhizobium etli (strain CIAT 652).